Here is a 948-residue protein sequence, read N- to C-terminus: Zinc finger CCCH domain-containing protein 18 (948 aa).

An N-acetylmethionine modification is found at M1. The interval 1-219 is disordered; that stretch reads MDVAESPELD…SDRKVRPRPT (219 aa). S6 is modified (phosphoserine). Acidic residues predominate over residues 15–25; sequence EDEEQPALSDD. Phosphoserine is present on residues S33, S45, S58, S64, S71, S75, S80, and S92. The segment covering 70 to 86 has biased composition (basic and acidic residues); that stretch reads ASEPKSQDQDSEAHELS. Residues 95 to 105 show a composition bias toward acidic residues; that stretch reads EEGDDVEEDGT. T105 is modified (phosphothreonine). Phosphoserine is present on residues S106 and S114. Over residues 106–120 the composition is skewed to basic and acidic residues; it reads SDLRDEASSVTRELD. Acidic residues-rich tracts occupy residues 121–132 and 139–154; these read EHELDYDEEVPE and QEEE…EEEK. S169 bears the Phosphoserine mark. Positions 177–186 are enriched in basic and acidic residues; that stretch reads EAAKEKKKED. The span at 187–203 shows a compositional bias: acidic residues; that stretch reads DDGEIDDGEIDDDDLEE. The span at 204–213 shows a compositional bias: basic and acidic residues; the sequence is GEVKDPSDRK. Residues 215–241 form a C3H1-type zinc finger; sequence RPRPTCRFFMKGNCTWGMSCRFIHPGV. G245 bears the Omega-N-methylarginine mark. Disordered stretches follow at residues 272–296 and 388–922; these read ANPW…TESA and YTEA…TLSR. Positions 392–480 are enriched in basic and acidic residues; sequence EPYHNYRERE…DREKDKEKPK (89 aa). Positions 395–460 form a coiled coil; that stretch reads HNYRERERER…RERAKRDEKD (66 aa). At S483 the chain carries Phosphoserine. K506 is covalently cross-linked (Glycyl lysine isopeptide (Lys-Gly) (interchain with G-Cter in SUMO2)). Positions 506–516 are enriched in basic and acidic residues; the sequence is KRADEWKDPWR. S528, S530, and S532 each carry phosphoserine. The span at 541–602 shows a compositional bias: low complexity; sequence SASSASASNS…SRSRSFSSSP (62 aa). Pro residues predominate over residues 603-612; that stretch reads SPSPTPSPHR. Glycyl lysine isopeptide (Lys-Gly) (interchain with G-Cter in SUMO2) cross-links involve residues K618 and K657. The span at 657 to 666 shows a compositional bias: basic and acidic residues; that stretch reads KPGDLREARR. Low complexity-rich tracts occupy residues 688-721 and 732-746; these read GSSY…SVHS and ASPV…PTPA. Positions 756–770 are enriched in basic and acidic residues; it reads KKEDGVREEKRRRDP. Residues 774 to 804 show a composition bias toward low complexity; the sequence is PPKSSKAPAGGKASQQAAAPQPAVPGQPQQG. The residue at position 810 (K810) is an N6-acetyllysine. K813 is covalently cross-linked (Glycyl lysine isopeptide (Lys-Gly) (interchain with G-Cter in SUMO2)). Basic and acidic residues predominate over residues 820-837; that stretch reads AADKGSRKRYEPSDKDRQ. Phosphoserine is present on residues S838, S847, S863, S888, and S891. The segment covering 888-898 has biased composition (polar residues); the sequence is SPQSKGSSKVT. The segment covering 902–919 has biased composition (low complexity); the sequence is GKATDTATAGTKSGKAST. K903 is covalently cross-linked (Glycyl lysine isopeptide (Lys-Gly) (interchain with G-Cter in SUMO2)). The stretch at 916-945 forms a coiled coil; sequence KASTLSRREELLKQLKAVEDAIARKRAKIP.

In terms of assembly, interacts with ZFC3H1 in a RNase-insensitive manner.

It is found in the nucleus. The chain is Zinc finger CCCH domain-containing protein 18 (Zc3h18) from Mus musculus (Mouse).